The following is a 453-amino-acid chain: MISSKPRLVVPYGLKTLLEGVSRAILKTNPTNITQFAAVYFKELIVFREGNSSLDIKDLIKQFHQMKVEKWAEGVTVEKKECIKEPIKPPPVPCKPTHMEKSTDTEEDNVAGPLFSNKTTQFPSVHAEVQSEETSEGARGPSDKPTTPKTDYTPPSSPPPAPVSAEYAYVPADPAQFAAQMLGNVPSTYSEVLMVDVATSTPAVPQDVLSAEFAEEVVLSAPLVCSGETVEVQVVSKTSAQVVVGPVSEAEPPKASSAPLQGEQEPPAHEAPDTQVTSASRISSIYNDVPVNEGVVYVEEIPGYIVIPFTDHDQVACVKEIEQSPPGSPKAVEPKTKISIESLKTVQVEENSQHKSSVHVEAEATVLLSNTALDGQPEVPAEPLDAEGFFKVASENSLHLETEIVIINPDDPGQEESGGNAAPHSSGDPFPPAPGGLTEPEMQPDGEAAPEQV.

An RIIa domain is found at 12-49; that stretch reads YGLKTLLEGVSRAILKTNPTNITQFAAVYFKELIVFRE. Disordered regions lie at residues 86–165, 246–278, and 406–453; these read PIKP…PVSA, PVSEAEPPKASSAPLQGEQEPPAHEAPDTQVTS, and IINP…PEQV. Over residues 143-154 the composition is skewed to low complexity; that stretch reads DKPTTPKTDYTP.

As to quaternary structure, interacts with FSCB. Phosphorylated on tyrosine residues during in vitro capacitation. Dephosphorylation affects its ability to bind calcium. In terms of tissue distribution, expressed in spermatozoa.

Its subcellular location is the cytoplasm. The protein localises to the cytoskeleton. The protein resides in the cell projection. It is found in the cilium. It localises to the flagellum. Functionally, may function as a regulator of both motility- and head-associated functions such as capacitation and the acrosome reaction. May bind calcium in vitro. In Mus musculus (Mouse), this protein is Calcium-binding tyrosine phosphorylation-regulated protein (Cabyr).